A 465-amino-acid chain; its full sequence is Cysteine--tRNA ligase (465 aa).

C27 is a binding site for Zn(2+). The 'HIGH' region signature appears at 29–39 (PTVYDDAHLGH). Positions 207, 237, and 241 each coordinate Zn(2+). A 'KMSKS' region motif is present at residues 269–273 (KMSKS). ATP is bound at residue K272.

This sequence belongs to the class-I aminoacyl-tRNA synthetase family. In terms of assembly, monomer. Zn(2+) is required as a cofactor.

The protein resides in the cytoplasm. The enzyme catalyses tRNA(Cys) + L-cysteine + ATP = L-cysteinyl-tRNA(Cys) + AMP + diphosphate. The protein is Cysteine--tRNA ligase of Helicobacter pylori (strain G27).